The chain runs to 9159 residues: Halomucin (9159 aa).

The first 30 residues, 1 to 30, serve as a signal peptide directing secretion; sequence MSQTAKPIFAVVVALIVLISGVAFIGSVSA. C-type lectin domains are found at residues 644–776 and 929–1060; these read TTGN…YLVE and YDGH…VEYG. Residues 1310 to 1332 show a composition bias toward polar residues; the sequence is QPQTVNDPDAVSTRNNNVGSNGL. The interval 1310 to 1351 is disordered; that stretch reads QPQTVNDPDAVSTRNNNVGSNGLDSKIEDDQNNGADGNPHGT. Residues 1756 to 3380 are V-G-G-L motif-rich region; that stretch reads VGGLIGESSG…GFNGEHVGGL (1625 aa). Disordered regions lie at residues 3484–3514, 4878–4912, 6570–6589, 7047–7097, 7660–7702, 7888–7923, 8212–8237, and 8369–8614; these read GATA…PAPQ, ESYW…TTPA, TDSA…SSGQ, TPTV…GINT, ATDS…NPGG, IDGD…EPAL, STQQ…GAAD, and DSTA…GSST. The segment covering 3495–3505 has biased composition (gly residues); that stretch reads GTPGGATGYGS. The segment covering 4880–4890 has biased composition (basic and acidic residues); it reads YWDKGATDKSD. 2 stretches are compositionally biased toward polar residues: residues 7048 to 7057 and 7068 to 7078; these read PTVTINSSSD and GEDSTSSNESS. A compositionally biased stretch (acidic residues) spans 7079–7092; it reads DGTESDQGDPEDDI. The segment covering 7681–7698 has biased composition (polar residues); sequence VTGSTPTFVSSGTVTTPE. The 108-residue stretch at 7686–7793 folds into the Cadherin domain; sequence PTFVSSGTVT…ITDVDEQPTG (108 aa). Composition is skewed to acidic residues over residues 7888-7898 and 7905-7920; these read IDGDGLADDNE and DNDD…EDQE. Acidic residues predominate over residues 8378–8390; it reads ALEDDSSNQDSGD. Composition is skewed to low complexity over residues 8391–8529 and 8538–8548; these read DSSN…SSQN and SAAAVGAESGS. Gly residues-rich tracts occupy residues 8549 to 8566 and 8574 to 8608; these read EMGG…GDGS and AGGG…GSSS.

Probably glycosylated with sugar containing sialic acid. This may further contribute to its overall negative charge, thereby creating an aqueous shield covering the cells.

The protein resides in the secreted. Functionally, may protect the organism from desiccation stress. May also contribute to the rigidity and maintenance of the unique square cell morphology of H.walsbyi. In Haloquadratum walsbyi (strain DSM 16790 / HBSQ001), this protein is Halomucin (hmu).